Here is a 353-residue protein sequence, read N- to C-terminus: Photosystem II D2 protein (353 aa).

T2 is subject to N-acetylthreonine. Phosphothreonine is present on T2. The chain crosses the membrane as a helical span at residues 41–61 (CAYFALGGWFTGTTFVTSWYT). Chlorophyll a is bound at residue H118. A helical transmembrane segment spans residues 125–141 (GFMLRQFELARSVQLRP). Residues Q130 and N143 each coordinate pheophytin a. Residues 153–166 (VFVSVFLIYPLGQS) form a helical membrane-spanning segment. Residue H198 participates in chlorophyll a binding. The helical transmembrane segment at 208–228 (AALLCAIHGATVENTLFEDGD) threads the bilayer. Residues H215 and F262 each contribute to the a plastoquinone site. H215 lines the Fe cation pocket. Residue H269 coordinates Fe cation. The helical transmembrane segment at 279–295 (GLWMSAIGVVGLALNLR) threads the bilayer.

The protein belongs to the reaction center PufL/M/PsbA/D family. In terms of assembly, PSII is composed of 1 copy each of membrane proteins PsbA, PsbB, PsbC, PsbD, PsbE, PsbF, PsbH, PsbI, PsbJ, PsbK, PsbL, PsbM, PsbT, PsbX, PsbY, PsbZ, Psb30/Ycf12, at least 3 peripheral proteins of the oxygen-evolving complex and a large number of cofactors. It forms dimeric complexes. The D1/D2 heterodimer binds P680, chlorophylls that are the primary electron donor of PSII, and subsequent electron acceptors. It shares a non-heme iron and each subunit binds pheophytin, quinone, additional chlorophylls, carotenoids and lipids. There is also a Cl(-1) ion associated with D1 and D2, which is required for oxygen evolution. The PSII complex binds additional chlorophylls, carotenoids and specific lipids. is required as a cofactor.

Its subcellular location is the plastid. It is found in the chloroplast thylakoid membrane. The enzyme catalyses 2 a plastoquinone + 4 hnu + 2 H2O = 2 a plastoquinol + O2. In terms of biological role, photosystem II (PSII) is a light-driven water:plastoquinone oxidoreductase that uses light energy to abstract electrons from H(2)O, generating O(2) and a proton gradient subsequently used for ATP formation. It consists of a core antenna complex that captures photons, and an electron transfer chain that converts photonic excitation into a charge separation. The D1/D2 (PsbA/PsbD) reaction center heterodimer binds P680, the primary electron donor of PSII as well as several subsequent electron acceptors. D2 is needed for assembly of a stable PSII complex. This Saccharum hybrid (Sugarcane) protein is Photosystem II D2 protein.